The sequence spans 187 residues: Large ribosomal subunit protein uL5 (187 aa).

This sequence belongs to the universal ribosomal protein uL5 family. Part of the 50S ribosomal subunit; part of the 5S rRNA/L5/L18/L25 subcomplex. Contacts the 5S rRNA and the P site tRNA. Forms a bridge to the 30S subunit in the 70S ribosome.

Functionally, this is one of the proteins that bind and probably mediate the attachment of the 5S RNA into the large ribosomal subunit, where it forms part of the central protuberance. In the 70S ribosome it contacts protein S13 of the 30S subunit (bridge B1b), connecting the 2 subunits; this bridge is implicated in subunit movement. Contacts the P site tRNA; the 5S rRNA and some of its associated proteins might help stabilize positioning of ribosome-bound tRNAs. This chain is Large ribosomal subunit protein uL5, found in Mycobacterium leprae (strain Br4923).